The chain runs to 244 residues: S-adenosyl-L-methionine-dependent Diels-Alderase iliD (244 aa).

This sequence belongs to the class I-like SAM-binding methyltransferase superfamily. Erg6/SMT family. It depends on S-adenosyl-L-methionine as a cofactor.

The catalysed reaction is 3-[(2E,4E,8S,10E,12Z)-4,8-dimethyltetradeca-2,4,10,12-tetraenoyl]-4-hydroxy-5-(4-hydroxyphenyl)-1,2-dihydropyridin-2-one = ilicicolin H. It functions in the pathway mycotoxin biosynthesis. In terms of biological role, S-adenosyl-l-methionine-dependent Diels-Alderase; part of the gene cluster that mediates the biosynthesis of ilicicolin H, a 4-hydroxy-2-pyridonealkaloid that has potent and broad antifungal activities by inhibiting the mitochondrial respiration chain. IliD catalyzes the Diels-Alder reaction that converts the acyclic 2-pyridone intermediate to 8-epi-ilicicolin H. The biosynthesis of ilicicolin H starts with formation of the tetramic acid by the hybrid PKS-NRPS synthetase iliA with the partnering trans-enoyl reductase iliB since iliA lacks a designated enoylreductase (ER) domain. The cytochrome P450 monooxygenase iliC then catalyzes the ring expansion of the tetramate to the acyclic 2-pyridone. The pericyclase iliD further converts the acyclic 2-pyridone into 8-epi-ilicicolin H. 8-epi-ilicicolin H might then spontaneously convert to ilicicolin H since ilicicolin H is produced in the absence of the epimerase iliE, in contrast to what was observed for the Talaromyces variabilis ilicolin H biosynthetic pathway. The sequence is that of S-adenosyl-L-methionine-dependent Diels-Alderase iliD from Neonectria sp. (strain DH2).